A 306-amino-acid polypeptide reads, in one-letter code: Aspartate carbamoyltransferase catalytic subunit (306 aa).

Carbamoyl phosphate-binding residues include arginine 54 and threonine 55. Lysine 83 contributes to the L-aspartate binding site. The carbamoyl phosphate site is built by arginine 104, histidine 132, and glutamine 135. Residues arginine 165 and arginine 227 each contribute to the L-aspartate site. Positions 266 and 267 each coordinate carbamoyl phosphate.

It belongs to the aspartate/ornithine carbamoyltransferase superfamily. ATCase family. As to quaternary structure, heterododecamer (2C3:3R2) of six catalytic PyrB chains organized as two trimers (C3), and six regulatory PyrI chains organized as three dimers (R2).

The catalysed reaction is carbamoyl phosphate + L-aspartate = N-carbamoyl-L-aspartate + phosphate + H(+). The protein operates within pyrimidine metabolism; UMP biosynthesis via de novo pathway; (S)-dihydroorotate from bicarbonate: step 2/3. Its function is as follows. Catalyzes the condensation of carbamoyl phosphate and aspartate to form carbamoyl aspartate and inorganic phosphate, the committed step in the de novo pyrimidine nucleotide biosynthesis pathway. In Clostridium kluyveri (strain NBRC 12016), this protein is Aspartate carbamoyltransferase catalytic subunit.